The primary structure comprises 794 residues: Signal transducer and activator of transcription 5A (794 aa).

Y90 carries the phosphotyrosine modification. The residue at position 128 (S128) is a Phosphoserine. The 98-residue stretch at 589-686 (WNDGAILGFV…EVFSKYYTPV (98 aa)) folds into the SH2 domain. At Y682 the chain carries Phosphotyrosine. At Y694 the chain carries Phosphotyrosine; by JAK2. The tract at residues 771-794 (PMDSLEPSLPPPTGLFTPGRGSLS) is disordered.

The protein belongs to the transcription factor STAT family. In terms of assembly, forms a homodimer or a heterodimer with a related family member. Binds NR3C1. Interacts with NCOA1 and SOCS7. Interacts with ERBB4. Interacts with EBF4. Interacts with CD69. Post-translationally, ISGylated. In terms of processing, tyrosine phosphorylated in response to KITLG/SCF, IL2, IL3, IL7, IL15, CSF2/GMCSF, GH1, PRL, EPO and THPO. Activated KIT promotes phosphorylation on tyrosine residues and subsequent translocation to the nucleus. Tyrosine phosphorylated in response to constitutively activated FGFR1, FGFR2, FGFR3 and FGFR4. Tyrosine phosphorylation is required for DNA-binding activity and dimerization. Serine phosphorylation is also required for maximal transcriptional activity. Tyrosine phosphorylated in response to signaling via activated FLT3; wild-type FLT3 results in much weaker phosphorylation than constitutively activated mutant FLT3. Alternatively, can be phosphorylated by JAK2 at Tyr-694.

It is found in the cytoplasm. It localises to the nucleus. Functionally, carries out a dual function: signal transduction and activation of transcription. Mediates cellular responses to the cytokine KITLG/SCF and other growth factors. May mediate cellular responses to activated FGFR1, FGFR2, FGFR3 and FGFR4. Binds to the GAS element and activates PRL-induced transcription. Regulates the expression of milk proteins during lactation. In Bos taurus (Bovine), this protein is Signal transducer and activator of transcription 5A (STAT5A).